Here is a 415-residue protein sequence, read N- to C-terminus: Methylmalonic aciduria type A homolog, mitochondrial (415 aa).

The transit peptide at 1-62 (MTISTLLLSP…LLSDGFRRTL (62 aa)) directs the protein to the mitochondrion. Residues 147–155 (GPPGAGKST), D289, and 325–327 (SAR) each bind GTP.

The protein belongs to the SIMIBI class G3E GTPase family. ArgK/MeaB subfamily. As to quaternary structure, homodimer. Interacts with MMUT (the apoenzyme form); the interaction is GTP dependent.

The protein resides in the mitochondrion. It is found in the cytoplasm. The enzyme catalyses GTP + H2O = GDP + phosphate + H(+). GTPase activity is stimulated by MMUT. Its function is as follows. GTPase, binds and hydrolyzes GTP. Involved in intracellular vitamin B12 metabolism, mediates the transport of cobalamin (Cbl) into mitochondria for the final steps of adenosylcobalamin (AdoCbl) synthesis. Functions as a G-protein chaperone that assists AdoCbl cofactor delivery from MMAB to the methylmalonyl-CoA mutase (MMUT). Plays a dual role as both a protectase and a reactivase for MMUT. Protects MMUT from progressive inactivation by oxidation by decreasing the rate of the formation of the oxidized inactive cofactor hydroxocobalamin (OH2Cbl). Additionally acts a reactivase by promoting the replacement of OH2Cbl by the active cofactor AdoCbl, restoring the activity of MMUT in the presence and hydrolysis of GTP. The protein is Methylmalonic aciduria type A homolog, mitochondrial of Mus musculus (Mouse).